The following is a 311-amino-acid chain: Pyrimidine-specific ribonucleoside hydrolase RihA (311 aa).

His240 is an active-site residue.

It belongs to the IUNH family. RihA subfamily.

Functionally, hydrolyzes cytidine or uridine to ribose and cytosine or uracil, respectively. The protein is Pyrimidine-specific ribonucleoside hydrolase RihA of Salmonella enteritidis PT4 (strain P125109).